The following is a 403-amino-acid chain: MSLCGPLNLSLAGEATPCAEPGAPNASAWPPSGRASASPALPIFSMTLGAVSNVLALALLAQAAGRLRRRRSAATFLLFVASLLATDLAGHVIPGALVLRLYAAGRSPAGGACHFLGGCMVFFGLCPLLLGCGMAVERCVGVTRPLLHAARVSAARARLALAVLAALALAVALLPLARVGRYELQYPGTWCFIGLRPAGGWRQALLAGLFAGLGLAALLAALVCNTLSGLALLRARWRRRRSRRRPQACGPDGRRHWGARAPRSASASSSSSVASVPGGSPGRGSARRARAHDVEMVGQLVGIMVVSCICWSPLLVLVVLAVGGWGSSSLQRPLFLAVRLASWNQILDPWVYILLRQAVLRQLLRLLPPRPGAKGSPAGLALTRSAWEASSLRSSRHSSLSHL.

The Extracellular segment spans residues M1–S38. N8 and N25 each carry an N-linked (GlcNAc...) asparagine glycan. A helical transmembrane segment spans residues P39 to G65. The Cytoplasmic segment spans residues R66–T75. The helical transmembrane segment at F76–L99 threads the bilayer. The Extracellular segment spans residues R100–H114. A disulfide bridge connects residues C113 and C191. The chain crosses the membrane as a helical span at residues F115–V136. At E137–R158 the chain is on the cytoplasmic side. The chain crosses the membrane as a helical span at residues L159–G180. At R181–A204 the chain is on the extracellular side. The chain crosses the membrane as a helical span at residues L205 to L230. The Cytoplasmic segment spans residues A231 to E295. The tract at residues R243–R287 is disordered. Residues A259–G278 are compositionally biased toward low complexity. A helical membrane pass occupies residues M296–V322. Residues G323 to P333 are Extracellular-facing. The helical transmembrane segment at L334–L355 threads the bilayer. Residues R356–L403 are Cytoplasmic-facing.

This sequence belongs to the G-protein coupled receptor 1 family.

Its subcellular location is the cell membrane. Functionally, receptor for prostaglandin E2 (PGE2). The activity of this receptor is mediated by G(q) proteins which activate a phosphatidylinositol-calcium second messenger system. May play a role as an important modulator of renal function. Implicated the smooth muscle contractile response to PGE2 in various tissues. The sequence is that of Prostaglandin E2 receptor EP1 subtype (PTGER1) from Canis lupus familiaris (Dog).